Here is a 332-residue protein sequence, read N- to C-terminus: Leucine carboxyl methyltransferase 1 (332 aa).

The tract at residues 1-23 (MAASLRRPSFTTCSSPTDTDDEG) is disordered. S-adenosyl-L-methionine is bound by residues Arg-71, Gly-96, Asp-120, 169 to 170 (DL), and Glu-196.

It belongs to the methyltransferase superfamily. LCMT family.

It catalyses the reaction [phosphatase 2A protein]-C-terminal L-leucine + S-adenosyl-L-methionine = [phosphatase 2A protein]-C-terminal L-leucine methyl ester + S-adenosyl-L-homocysteine. Functionally, methylates the carboxyl group of the C-terminal leucine residue of protein phosphatase 2A catalytic subunits to form alpha-leucine ester residues. This chain is Leucine carboxyl methyltransferase 1 (LCMT1), found in Bos taurus (Bovine).